The sequence spans 616 residues: Dihydroxy-acid dehydratase (616 aa).

D81 is a binding site for Mg(2+). C122 is a [2Fe-2S] cluster binding site. Residues D123 and K124 each contribute to the Mg(2+) site. An N6-carboxylysine modification is found at K124. C195 provides a ligand contact to [2Fe-2S] cluster. E491 contacts Mg(2+). S517 functions as the Proton acceptor in the catalytic mechanism.

Belongs to the IlvD/Edd family. Homodimer. [2Fe-2S] cluster serves as cofactor. It depends on Mg(2+) as a cofactor.

It carries out the reaction (2R)-2,3-dihydroxy-3-methylbutanoate = 3-methyl-2-oxobutanoate + H2O. The enzyme catalyses (2R,3R)-2,3-dihydroxy-3-methylpentanoate = (S)-3-methyl-2-oxopentanoate + H2O. It functions in the pathway amino-acid biosynthesis; L-isoleucine biosynthesis; L-isoleucine from 2-oxobutanoate: step 3/4. The protein operates within amino-acid biosynthesis; L-valine biosynthesis; L-valine from pyruvate: step 3/4. In terms of biological role, functions in the biosynthesis of branched-chain amino acids. Catalyzes the dehydration of (2R,3R)-2,3-dihydroxy-3-methylpentanoate (2,3-dihydroxy-3-methylvalerate) into 2-oxo-3-methylpentanoate (2-oxo-3-methylvalerate) and of (2R)-2,3-dihydroxy-3-methylbutanoate (2,3-dihydroxyisovalerate) into 2-oxo-3-methylbutanoate (2-oxoisovalerate), the penultimate precursor to L-isoleucine and L-valine, respectively. The chain is Dihydroxy-acid dehydratase from Methylocella silvestris (strain DSM 15510 / CIP 108128 / LMG 27833 / NCIMB 13906 / BL2).